The chain runs to 198 residues: NADH-quinone oxidoreductase subunit B 1 (198 aa).

[4Fe-4S] cluster contacts are provided by C77, C78, C142, and C172.

Belongs to the complex I 20 kDa subunit family. In terms of assembly, NDH-1 is composed of 14 different subunits. Subunits NuoB, C, D, E, F, and G constitute the peripheral sector of the complex. [4Fe-4S] cluster serves as cofactor.

It localises to the cell inner membrane. The enzyme catalyses a quinone + NADH + 5 H(+)(in) = a quinol + NAD(+) + 4 H(+)(out). Its function is as follows. NDH-1 shuttles electrons from NADH, via FMN and iron-sulfur (Fe-S) centers, to quinones in the respiratory chain. The immediate electron acceptor for the enzyme in this species is believed to be ubiquinone. Couples the redox reaction to proton translocation (for every two electrons transferred, four hydrogen ions are translocated across the cytoplasmic membrane), and thus conserves the redox energy in a proton gradient. In Rhodopseudomonas palustris (strain ATCC BAA-98 / CGA009), this protein is NADH-quinone oxidoreductase subunit B 1.